A 549-amino-acid polypeptide reads, in one-letter code: Oxygen-dependent choline dehydrogenase (549 aa).

Asp-4–Glu-33 is an FAD binding site. The Proton acceptor role is filled by His-465.

This sequence belongs to the GMC oxidoreductase family. FAD is required as a cofactor.

The enzyme catalyses choline + A = betaine aldehyde + AH2. The catalysed reaction is betaine aldehyde + NAD(+) + H2O = glycine betaine + NADH + 2 H(+). It participates in amine and polyamine biosynthesis; betaine biosynthesis via choline pathway; betaine aldehyde from choline (cytochrome c reductase route): step 1/1. Its function is as follows. Involved in the biosynthesis of the osmoprotectant glycine betaine. Catalyzes the oxidation of choline to betaine aldehyde and betaine aldehyde to glycine betaine at the same rate. This is Oxygen-dependent choline dehydrogenase from Brucella canis (strain ATCC 23365 / NCTC 10854 / RM-666).